The following is a 283-amino-acid chain: uncharacterized protein (283 aa).

The HTH araC/xylS-type domain occupies 172-270 (EAIRDYIDER…ERSPSEYRRQ (99 aa)). 2 DNA-binding regions (H-T-H motif) span residues 189–210 (ESVAQAFYISPNYLSHLFQKTG) and 237–260 (VKEVAHACGFVDSNYFCRLFRKNT).

This is an uncharacterized protein from Escherichia coli (strain K12).